The primary structure comprises 211 residues: Uracil phosphoribosyltransferase (211 aa).

5-phospho-alpha-D-ribose 1-diphosphate contacts are provided by residues Arg-77, Arg-102, and 129-137; that span reads DPMLATGGS. Uracil is bound by residues Ile-192 and 197 to 199; that span reads GDA. A 5-phospho-alpha-D-ribose 1-diphosphate-binding site is contributed by Asp-198.

This sequence belongs to the UPRTase family. Mg(2+) is required as a cofactor.

It catalyses the reaction UMP + diphosphate = 5-phospho-alpha-D-ribose 1-diphosphate + uracil. It participates in pyrimidine metabolism; UMP biosynthesis via salvage pathway; UMP from uracil: step 1/1. With respect to regulation, allosterically activated by GTP. Its function is as follows. Catalyzes the conversion of uracil and 5-phospho-alpha-D-ribose 1-diphosphate (PRPP) to UMP and diphosphate. This Corynebacterium glutamicum (strain R) protein is Uracil phosphoribosyltransferase.